Reading from the N-terminus, the 119-residue chain is Ribonuclease P protein component (119 aa).

It belongs to the RnpA family. Consists of a catalytic RNA component (M1 or rnpB) and a protein subunit.

It catalyses the reaction Endonucleolytic cleavage of RNA, removing 5'-extranucleotides from tRNA precursor.. Functionally, RNaseP catalyzes the removal of the 5'-leader sequence from pre-tRNA to produce the mature 5'-terminus. It can also cleave other RNA substrates such as 4.5S RNA. The protein component plays an auxiliary but essential role in vivo by binding to the 5'-leader sequence and broadening the substrate specificity of the ribozyme. In Pediococcus pentosaceus (strain ATCC 25745 / CCUG 21536 / LMG 10740 / 183-1w), this protein is Ribonuclease P protein component.